The sequence spans 192 residues: Imidazole glycerol phosphate synthase subunit HisH (192 aa).

Positions 1 to 192 (MIVIVDYGLG…QAIQGGFIND (192 aa)) constitute a Glutamine amidotransferase type-1 domain. The Nucleophile role is filled by Cys-77. Catalysis depends on residues His-169 and Glu-171.

In terms of assembly, heterodimer of HisH and HisF.

The protein resides in the cytoplasm. It carries out the reaction 5-[(5-phospho-1-deoxy-D-ribulos-1-ylimino)methylamino]-1-(5-phospho-beta-D-ribosyl)imidazole-4-carboxamide + L-glutamine = D-erythro-1-(imidazol-4-yl)glycerol 3-phosphate + 5-amino-1-(5-phospho-beta-D-ribosyl)imidazole-4-carboxamide + L-glutamate + H(+). The catalysed reaction is L-glutamine + H2O = L-glutamate + NH4(+). Its pathway is amino-acid biosynthesis; L-histidine biosynthesis; L-histidine from 5-phospho-alpha-D-ribose 1-diphosphate: step 5/9. In terms of biological role, IGPS catalyzes the conversion of PRFAR and glutamine to IGP, AICAR and glutamate. The HisH subunit catalyzes the hydrolysis of glutamine to glutamate and ammonia as part of the synthesis of IGP and AICAR. The resulting ammonia molecule is channeled to the active site of HisF. The sequence is that of Imidazole glycerol phosphate synthase subunit HisH from Staphylococcus aureus (strain bovine RF122 / ET3-1).